A 235-amino-acid chain; its full sequence is Ribonuclease 3 (235 aa).

An RNase III domain is found at 11–137 (RAWCAEALGY…VVGALYLDGG (127 aa)). E51 is a Mg(2+) binding site. D55 is an active-site residue. Residues D123 and E126 each coordinate Mg(2+). E126 is an active-site residue. Positions 164–233 (DYKTQLQEQL…ARQALMPEHH (70 aa)) constitute a DRBM domain.

The protein belongs to the ribonuclease III family. Homodimer. Mg(2+) is required as a cofactor.

The protein localises to the cytoplasm. It carries out the reaction Endonucleolytic cleavage to 5'-phosphomonoester.. Digests double-stranded RNA. Involved in the processing of primary rRNA transcript to yield the immediate precursors to the large and small rRNAs (23S and 16S). Processes some mRNAs, and tRNAs when they are encoded in the rRNA operon. Processes pre-crRNA and tracrRNA of type II CRISPR loci if present in the organism. The chain is Ribonuclease 3 from Symbiobacterium thermophilum (strain DSM 24528 / JCM 14929 / IAM 14863 / T).